A 335-amino-acid polypeptide reads, in one-letter code: Nod factor export ATP-binding protein I (335 aa).

Positions 1–10 (MTQEVPRRLE) are enriched in basic and acidic residues. The interval 1–22 (MTQEVPRRLEPSPFEWKGDAGP) is disordered. One can recognise an ABC transporter domain in the interval 37-267 (IDLASVTKSY…KIGCQVIEIY (231 aa)). Residue 69-76 (GPNGAGKS) coordinates ATP.

This sequence belongs to the ABC transporter superfamily. Lipooligosaccharide exporter (TC 3.A.1.102) family. As to quaternary structure, the complex is composed of two ATP-binding proteins (NodI) and two transmembrane proteins (NodJ).

The protein resides in the cell inner membrane. Part of the ABC transporter complex NodIJ involved in the export of the nodulation factors (Nod factors), the bacterial signal molecules that induce symbiosis and subsequent nodulation induction. Nod factors are LCO (lipo-chitin oligosaccharide), a modified beta-1,4-linked N-acetylglucosamine oligosaccharide. This subunit is responsible for energy coupling to the transport system. This is Nod factor export ATP-binding protein I from Rhizobium meliloti (Ensifer meliloti).